Here is a 218-residue protein sequence, read N- to C-terminus: Large ribosomal subunit protein uL3 (218 aa).

This sequence belongs to the universal ribosomal protein uL3 family. As to quaternary structure, part of the 50S ribosomal subunit. Forms a cluster with proteins L14 and L19.

In terms of biological role, one of the primary rRNA binding proteins, it binds directly near the 3'-end of the 23S rRNA, where it nucleates assembly of the 50S subunit. The chain is Large ribosomal subunit protein uL3 from Corynebacterium urealyticum (strain ATCC 43042 / DSM 7109).